The chain runs to 228 residues: Protein crossbronx homolog (228 aa).

Positions L14–R168 constitute a UBC core domain.

The protein belongs to the ubiquitin-conjugating enzyme family. FTS subfamily.

This is Protein crossbronx homolog from Anopheles gambiae (African malaria mosquito).